The following is a 1204-amino-acid chain: Exportin-5 (1204 aa).

Residues 1 to 108 (MEMEQVNALC…ANGTLRILEE (108 aa)) form a necessary for interaction with Ran region. At K396 the chain carries N6-acetyllysine. The segment at 533–640 (ELLQLVLNFE…KQLLSNELLL (108 aa)) is necessary for interaction with ILF3. The interval 641–642 (TQ) is pre-siRNA binding.

The protein belongs to the exportin family. As to quaternary structure, component of a nuclear export receptor complex composed of XPO5, RAN, dsRNA-binding proteins and dsRNA. Found in a nuclear export complex with XPO5, RAN, EEF1A1, and aminoacylated tRNA. Found in a nuclear export complex with XPO5, RAN, ILF3 and dsRNA. Found in a nuclear export complex with XPO5, RAN and pre-miRNA. Found in a nuclear export complex with XPO5, RAN, ILF3 and minihelix VA1 dsRNA. Found in a nuclear export complex with XPO5, RAN, ILF3, ZNF346 and dsRNA. Interacts with EEF1A1, ILF3, NUP153, NUP214 and ZNF346. Interacts with RAN and cargo proteins in a GTP-dependent manner. Interacts with ADAR/ADAR1 (via DRBM domains). Interacts with SMAD4; mediates nuclear export of SMAD4. Interacts with RAN (GTP-bound form).

The protein resides in the nucleus. It is found in the cytoplasm. Its function is as follows. Mediates the nuclear export of proteins bearing a double-stranded RNA binding domain (dsRBD) and double-stranded RNAs (cargos). XPO5 in the nucleus binds cooperatively to the RNA and to the GTPase Ran in its active GTP-bound form. Proteins containing dsRBDs can associate with this trimeric complex through the RNA. Docking of this complex to the nuclear pore complex (NPC) is mediated through binding to nucleoporins. Upon transit of a nuclear export complex into the cytoplasm, hydrolysis of Ran-GTP to Ran-GDP (induced by RANBP1 and RANGAP1, respectively) cause disassembly of the complex and release of the cargo from the export receptor. XPO5 then returns to the nuclear compartment by diffusion through the nuclear pore complex, to mediate another round of transport. The directionality of nuclear export is thought to be conferred by an asymmetric distribution of the GTP- and GDP-bound forms of Ran between the cytoplasm and nucleus. Overexpression may in some circumstances enhance RNA-mediated gene silencing (RNAi). Mediates nuclear export of ADAR/ADAR1 in a RanGTP-dependent manner. Mediates the nuclear export of micro-RNA precursors, which form short hairpins. Also mediates the nuclear export of synthetic short hairpin RNAs used for RNA interference. In some circumstances can also mediate the nuclear export of deacylated and aminoacylated tRNAs. Specifically recognizes dsRNAs that lack a 5'-overhang in a sequence-independent manner, have only a short 3'-overhang, and that have a double-stranded length of at least 15 base-pairs. Binding is dependent on Ran-GTP. The protein is Exportin-5 (Xpo5) of Mus musculus (Mouse).